Reading from the N-terminus, the 555-residue chain is Transmembrane protein 87A (555 aa).

A signal peptide spans 1 to 21 (MAAAAWLQVLPVILLLLGAHP). Residues 22–225 (SPLSFFSAGP…YEYLTLEDYP (204 aa)) lie on the Lumenal side of the membrane. Intrachain disulfides connect Cys74–Cys128 and Cys89–Cys431. N-linked (GlcNAc...) asparagine glycans are attached at residues Asn79, Asn127, Asn157, and Asn160. A helical membrane pass occupies residues 226-246 (LMIFFMVMCIVYVLFGVLWLA). The Cytoplasmic segment spans residues 247–257 (WSACYWRDLLR). A helical transmembrane segment spans residues 258–278 (IQFWIGAVIFLGMLEKAVFYA). Residues 279–305 (EFQNIRYKGESVQGALILAELLSAVKR) are Lumenal-facing. Residues 306–322 (SLARTLVIIVSLGYGIV) traverse the membrane as a helical segment. Over 323–325 (KPR) the chain is Cytoplasmic. A helical transmembrane segment spans residues 326–346 (LGVTLHKVVVAGALYLLFSGM). Topologically, residues 347–361 (EGVLRVTGAQTDLAS) are lumenal. A helical membrane pass occupies residues 362–382 (LAFIPLAFLDTALCWWIFISL). Topologically, residues 383–403 (TQTMKLLKLRRNIVKLSLYRH) are cytoplasmic. A helical transmembrane segment spans residues 404–424 (FTNTLILAVAASIVFIIWTTM). Residues 425–437 (KFRIVTCQSDWRE) are Lumenal-facing. Residues 438 to 458 (LWVDDAIWRLLFSMILFVIMV) form a helical membrane-spanning segment. Topologically, residues 459 to 555 (LWRPSANNQR…ITHFERSKME (97 aa)) are cytoplasmic. Residues 473–516 (PLSEEEEEDEQKEPMLKESFEGMKMRSTKQEPNGNSKVNKAQED) are disordered. Positions 484–496 (KEPMLKESFEGMK) are enriched in basic and acidic residues. The span at 502–511 (QEPNGNSKVN) shows a compositional bias: polar residues. Ser540 bears the Phosphoserine mark.

It belongs to the LU7TM family. TMEM87 subfamily. As to quaternary structure, may interact with STOML3; STOML3 potentiates the mechanosensitive ion channel activity associated with TMEM87A.

The protein localises to the cell membrane. It localises to the golgi apparatus membrane. It is found in the cell projection. The protein resides in the ruffle. Potential monoatomic ion channel gated by mechanical force, implicated in normal touch sensitivity through the generation of mechanically activated currents. However, a direct channel activity is debated and an alternative could be that it functions as a chaperone for an unidentified mechanosensitive ion channel. Could also be involved in cell mechanosensitivity regulating cell adhesion and migration. May also be involved in retrograde transport from endosomes to the trans-Golgi network (TGN). In Homo sapiens (Human), this protein is Transmembrane protein 87A.